Reading from the N-terminus, the 258-residue chain is Synapse differentiation-inducing gene protein 1 (258 aa).

At 1 to 181 (MAGVVEQKSG…NFLVMPPRDH (181 aa)) the chain is on the cytoplasmic side. Serine 137 is modified (phosphoserine). A helical membrane pass occupies residues 182–202 (LGLSVFSMLCCFWPLGIAAFY). The Extracellular segment spans residues 203-228 (LSHETNKAVAKGDFHQASTSSRRALF). An intramembrane region (helical) is located at residues 229–249 (LAVLSITIGTGIYVGVAVALI). The Extracellular portion of the chain corresponds to 250-258 (AYLSKSNHL).

This sequence belongs to the CD225/Dispanin family. Homodimer. Interacts with GRIA1 and GRIA2.

It is found in the cell membrane. It localises to the early endosome membrane. The protein resides in the postsynaptic density membrane. Its subcellular location is the synapse. The protein localises to the cell projection. It is found in the dendrite. It localises to the dendritic spine. May regulate AMPA receptor content at nascent synapses, and have a role in postsynaptic development and maturation. The sequence is that of Synapse differentiation-inducing gene protein 1 (SYNDIG1) from Bos taurus (Bovine).